The chain runs to 699 residues: Receptor-type tyrosine-protein phosphatase epsilon (699 aa).

The signal sequence occupies residues 1-22; sequence MEPFCPLLLASFSLSLATAGQG. Residues 20–36 are compositionally biased toward low complexity; it reads GQGNDTTPTESNWTSTT. The disordered stretch occupies residues 20–41; the sequence is GQGNDTTPTESNWTSTTAGPPD. N23 and N31 each carry an N-linked (GlcNAc...) asparagine glycan. The Extracellular portion of the chain corresponds to 23–47; the sequence is NDTTPTESNWTSTTAGPPDPGTSQP. A helical membrane pass occupies residues 48 to 68; sequence LLTWLLLPLLLLLFLLAAYFF. The Cytoplasmic portion of the chain corresponds to 69–699; the sequence is RFRKQRKAVV…DIFSDYANFK (631 aa). Tyrosine-protein phosphatase domains are found at residues 134–393 and 425–688; these read FREE…LLEY and LEEE…VQDF. Substrate is bound by residues D302, 334-340, and Q378; that span reads CSAGVGR. The active-site Phosphocysteine intermediate is the C334. The active-site Phosphocysteine intermediate is the C629. At Y695 the chain carries Phosphotyrosine.

The protein belongs to the protein-tyrosine phosphatase family. Receptor class 4 subfamily. As to quaternary structure, monomer. Isoform 2: Homodimer. Can form oligomers. Dimerization is increased by oxidative stress and decreased by EGFR. Isoform 2 interacts with GRB2. Post-translationally, a catalytically active cytoplasmic form (p65) is produced by proteolytic cleavage of either isoform 1, isoform 2 or isoform 3. Isoform 1 and isoform 2 are phosphorylated on tyrosine residues by tyrosine kinase Neu. In terms of processing, N-glycosylated. In terms of tissue distribution, isoform 1 is highly expressed in the brain, lung, spleen and testis. Isoform 2 is highly expressed in thymus, spleen and lung. Isoform 1 and isoform 2 are expressed in primary hepatocytes.

It localises to the cell membrane. It is found in the cytoplasm. The enzyme catalyses O-phospho-L-tyrosyl-[protein] + H2O = L-tyrosyl-[protein] + phosphate. In terms of biological role, isoform 1 plays a critical role in signaling transduction pathways and phosphoprotein network topology in red blood cells. May play a role in osteoclast formation and function. Acts as a negative regulator of insulin receptor (IR) signaling and is involved in insulin-induced glucose metabolism mainly through direct dephosphorylation and inactivation of IR in hepatocytes and liver. Functionally, isoform 2 acts as a negative regulator of insulin receptor (IR) signaling in skeletal muscle. Regulates insulin-induced tyrosine phosphorylation of insulin receptor (IR) and insulin receptor substrate 1 (IRS-1), phosphorylation of protein kinase B and glycogen synthase kinase-3 and insulin induced stimulation of glucose uptake. Isoform 1 and isoform 2 act as a negative regulator of FceRI-mediated signal transduction leading to cytokine production and degranulation, most likely by acting at the level of SYK to affect downstream events such as phosphorylation of SLP76 and LAT and mobilization of Ca(2+). The protein is Receptor-type tyrosine-protein phosphatase epsilon (Ptpre) of Rattus norvegicus (Rat).